A 112-amino-acid polypeptide reads, in one-letter code: Ribonuclease P protein component (112 aa).

This sequence belongs to the RnpA family. As to quaternary structure, consists of a catalytic RNA component (M1 or rnpB) and a protein subunit.

It catalyses the reaction Endonucleolytic cleavage of RNA, removing 5'-extranucleotides from tRNA precursor.. Its function is as follows. RNaseP catalyzes the removal of the 5'-leader sequence from pre-tRNA to produce the mature 5'-terminus. It can also cleave other RNA substrates such as 4.5S RNA. The protein component plays an auxiliary but essential role in vivo by binding to the 5'-leader sequence and broadening the substrate specificity of the ribozyme. The sequence is that of Ribonuclease P protein component from Mycoplasmopsis synoviae (strain 53) (Mycoplasma synoviae).